We begin with the raw amino-acid sequence, 734 residues long: Adhesion G protein-coupled receptor E5 (734 aa).

Positions 1-26 are cleaved as a signal peptide; the sequence is MGGPHGGPFLLFHVLCFLLTLSEVGS. The Extracellular segment spans residues 27–449; that stretch reads QNSKACALPC…VEDPKLALIT (423 aa). The EGF-like 1 domain maps to 28-70; sequence NSKACALPCPPNSSCVNGTACRCAPGFISFSGEIFTDPLESCD. Intrachain disulfides connect Cys32/Cys42, Cys36/Cys48, Cys50/Cys69, Cys75/Cys89, Cys83/Cys98, Cys100/Cys121, Cys127/Cys140, Cys134/Cys149, and Cys151/Cys170. N-linked (GlcNAc...) asparagine glycosylation is found at Asn39 and Asn44. Residues 71–122 form the EGF-like 2; calcium-binding domain; it reads DINECGPPSPVDCGSSADCQNTEGGYYCTCSPGYEPVSGAMIFRNESENTCR. Residues Asn115 and Asn136 are each glycosylated (N-linked (GlcNAc...) asparagine). The EGF-like 3; calcium-binding domain occupies 123–171; sequence DVDECSSGQHQCHNSTVCFNTVGSYTCHCREGWEPKHGLKNKQKDTICK. A GAIN-B domain is found at 265 to 441; sequence TYRSLDNTEL…AILMAHYDVE (177 aa). 5 N-linked (GlcNAc...) asparagine glycosylation sites follow: Asn285, Asn327, Asn372, Asn403, and Asn418. Disulfide bonds link Cys393-Cys423 and Cys411-Cys425. A GPS region spans residues 393–441; sequence CAFWKKDSNGNGSWATTGCWKMGRGNGSITCQCSHLSSFAILMAHYDVE. The chain crosses the membrane as a helical span at residues 450-470; the sequence is KVGLALSLACLLLCILTFLLV. Over 471 to 478 the chain is Cytoplasmic; the sequence is RPIQGSRT. Residues 479-499 form a helical membrane-spanning segment; that stretch reads TVHLHLCICLFVGSAIFLAGI. Residues 500 to 519 are Extracellular-facing; sequence ENEGGEVGTRCRLVAVLLHY. Residues 520–540 form a helical membrane-spanning segment; sequence CFLAAFCWMSLEGVELYFLVV. Over 541–550 the chain is Cytoplasmic; the sequence is RVFQGQGMRK. A helical membrane pass occupies residues 551-571; sequence LWLCLIGYGVPLIIVGISAGA. At 572 to 593 the chain is on the extracellular side; sequence YSKGYGREKFCWLNFEGGFLWS. The chain crosses the membrane as a helical span at residues 594-614; it reads FVGPVTFIVLGNAIIFVITVW. Residues 615–637 are Cytoplasmic-facing; sequence KLTQKFSEINPDIKKLKKARVLT. The chain crosses the membrane as a helical span at residues 638 to 658; sequence ITAIAQLFVLGCTWVFGLLLF. Residues 659 to 662 are Extracellular-facing; that stretch reads NPES. The helical transmembrane segment at 663–683 threads the bilayer; the sequence is WVLSYIFSILNCLQGFFLFVL. The Cytoplasmic portion of the chain corresponds to 684-734; sequence YCLLNKKVREEYRKWACMVAGNKYSEFATTTSGSGSSHNQTQALRPSESGM. The tract at residues 712 to 734 is disordered; the sequence is TTTSGSGSSHNQTQALRPSESGM. Thr713 carries the phosphothreonine modification. Position 715 is a phosphoserine (Ser715). Thr724 carries the post-translational modification Phosphothreonine. Ser730 and Ser732 each carry phosphoserine.

This sequence belongs to the G-protein coupled receptor 2 family. LN-TM7 subfamily. In terms of assembly, forms a heterodimer, consisting of a large extracellular region (alpha subunit) non-covalently linked to a seven-transmembrane moiety (beta subunit). Interacts with complement decay-accelerating factor (DAF) and with chondroitin sulfate. Proteolytically cleaved into 2 subunits, an extracellular alpha subunit and a seven-transmembrane subunit.

It localises to the cell membrane. It is found in the secreted. The protein localises to the extracellular space. Functionally, receptor potentially involved in both adhesion and signaling processes early after leukocyte activation. Plays an essential role in leukocyte migration. The sequence is that of Adhesion G protein-coupled receptor E5 from Bos taurus (Bovine).